Consider the following 403-residue polypeptide: Argininosuccinate synthase (403 aa).

Residues 13-21 (AYSGGLDTS) and Ala40 each bind ATP. Tyr92 and Ser97 together coordinate L-citrulline. Gly122 contacts ATP. L-aspartate-binding residues include Thr124, Asn128, and Asp129. Asn128 is an L-citrulline binding site. Arg132, Ser181, Ser190, Glu266, and Tyr278 together coordinate L-citrulline.

Belongs to the argininosuccinate synthase family. Type 1 subfamily. As to quaternary structure, homotetramer.

Its subcellular location is the cytoplasm. The catalysed reaction is L-citrulline + L-aspartate + ATP = 2-(N(omega)-L-arginino)succinate + AMP + diphosphate + H(+). It functions in the pathway amino-acid biosynthesis; L-arginine biosynthesis; L-arginine from L-ornithine and carbamoyl phosphate: step 2/3. This Aliivibrio salmonicida (strain LFI1238) (Vibrio salmonicida (strain LFI1238)) protein is Argininosuccinate synthase.